Here is a 341-residue protein sequence, read N- to C-terminus: uncharacterized protein (341 aa).

This sequence belongs to the cycloisomerase 2 family.

This is an uncharacterized protein from Lactococcus lactis subsp. lactis (strain IL1403) (Streptococcus lactis).